The following is a 275-amino-acid chain: NH(3)-dependent NAD(+) synthetase (275 aa).

50 to 57 (GISGGVDS) serves as a coordination point for ATP. Position 56 (Asp-56) interacts with Mg(2+). Arg-147 is a deamido-NAD(+) binding site. Thr-167 is an ATP binding site. Glu-172 contributes to the Mg(2+) binding site. 2 residues coordinate deamido-NAD(+): Lys-180 and Asp-187. 2 residues coordinate ATP: Lys-196 and Thr-218. 267 to 268 (HK) is a binding site for deamido-NAD(+).

This sequence belongs to the NAD synthetase family. As to quaternary structure, homodimer.

The enzyme catalyses deamido-NAD(+) + NH4(+) + ATP = AMP + diphosphate + NAD(+) + H(+). Its pathway is cofactor biosynthesis; NAD(+) biosynthesis; NAD(+) from deamido-NAD(+) (ammonia route): step 1/1. Functionally, catalyzes the ATP-dependent amidation of deamido-NAD to form NAD. Uses ammonia as a nitrogen source. The polypeptide is NH(3)-dependent NAD(+) synthetase (Pseudomonas entomophila (strain L48)).